The following is a 146-amino-acid chain: Large ribosomal subunit protein uL15 (146 aa).

Positions 1 to 65 are disordered; that stretch reads MSDIQLNTLK…GQMPLQRRLP (65 aa). A compositionally biased stretch (gly residues) spans 24 to 34; that stretch reads RGIGSGLGKTA.

Belongs to the universal ribosomal protein uL15 family. Part of the 50S ribosomal subunit.

Functionally, binds to the 23S rRNA. This chain is Large ribosomal subunit protein uL15, found in Bordetella petrii (strain ATCC BAA-461 / DSM 12804 / CCUG 43448).